The sequence spans 339 residues: Uroporphyrinogen decarboxylase (339 aa).

Residues 21–25 (RQAGR), Asp-71, Tyr-147, Ser-202, and His-315 each bind substrate.

It belongs to the uroporphyrinogen decarboxylase family. As to quaternary structure, homodimer.

Its subcellular location is the cytoplasm. It catalyses the reaction uroporphyrinogen III + 4 H(+) = coproporphyrinogen III + 4 CO2. It functions in the pathway porphyrin-containing compound metabolism; protoporphyrin-IX biosynthesis; coproporphyrinogen-III from 5-aminolevulinate: step 4/4. In terms of biological role, catalyzes the decarboxylation of four acetate groups of uroporphyrinogen-III to yield coproporphyrinogen-III. This Helicobacter pylori (strain Shi470) protein is Uroporphyrinogen decarboxylase.